The chain runs to 80 residues: uncharacterized protein (80 aa).

The N-terminal stretch at M1–V15 is a signal peptide.

This is an uncharacterized protein from Archaeoglobus fulgidus (strain ATCC 49558 / DSM 4304 / JCM 9628 / NBRC 100126 / VC-16).